The sequence spans 237 residues: Dihydroceramide fatty acyl 2-hydroxylase FAH2 (237 aa).

The next 2 helical transmembrane spans lie at 54 to 74 (VWWAIPTIWLPVVCYVLSISA) and 77 to 97 (GLTFPQIGLIVAFGVLTWTLL). Zn(2+)-binding residues include His102, His107, His123, His126, and His127. 2 helical membrane-spanning segments follow: residues 134 to 154 (LRLVFPPTATAILLVPLWKLL) and 156 to 176 (LLATPATAPAILGGILFGYVM). Zn(2+) contacts are provided by His181, His185, His201, His204, and His205.

Belongs to the sterol desaturase family. As to quaternary structure, interacts with CYTB5-A, CYTB5-B, CYTB5-C and CYTB5-D. Requires Zn(2+) as cofactor. Expressed in leaves, roots, flowers and seeds.

The protein localises to the endoplasmic reticulum membrane. It catalyses the reaction an N-(1,2-saturated acyl)sphinganine + 2 Fe(II)-[cytochrome b5] + O2 + 2 H(+) = an N-[(2'R)-hydroxyacyl]sphinganine + 2 Fe(III)-[cytochrome b5] + H2O. Functionally, fatty acid 2-hydroxylase involved in the alpha-hydroxylation of the long-chain fatty acid (LCFA) palmitic acid. Probably involved in the resistance response to oxidative stress. The protein is Dihydroceramide fatty acyl 2-hydroxylase FAH2 of Arabidopsis thaliana (Mouse-ear cress).